The following is a 102-amino-acid chain: MLDFYILVALILFFIGVLGVILRKNIFTIFMSVELMLNATALIFATFARQSLNLDGQVIVMLIIAIAAAEASFGLALIVLLYKKKQSLNIDIFDELKDRDVS.

The next 3 helical transmembrane spans lie at 2–22, 26–46, and 58–78; these read LDFYILVALILFFIGVLGVIL, IFTIFMSVELMLNATALIFAT, and VIVMLIIAIAAAEASFGLALI.

Belongs to the complex I subunit 4L family. As to quaternary structure, NDH-1 is composed of 14 different subunits. Subunits NuoA, H, J, K, L, M, N constitute the membrane sector of the complex.

It is found in the cell inner membrane. It catalyses the reaction a quinone + NADH + 5 H(+)(in) = a quinol + NAD(+) + 4 H(+)(out). In terms of biological role, NDH-1 shuttles electrons from NADH, via FMN and iron-sulfur (Fe-S) centers, to quinones in the respiratory chain. The immediate electron acceptor for the enzyme in this species is believed to be ubiquinone. Couples the redox reaction to proton translocation (for every two electrons transferred, four hydrogen ions are translocated across the cytoplasmic membrane), and thus conserves the redox energy in a proton gradient. The polypeptide is NADH-quinone oxidoreductase subunit K (Campylobacter fetus subsp. fetus (strain 82-40)).